Reading from the N-terminus, the 84-residue chain is Large ribosomal subunit protein bL27 (84 aa).

A disordered region spans residues 1–29 (MAHKKGGGSTKNGRDSNPKYLGIKASGGS).

The protein belongs to the bacterial ribosomal protein bL27 family.

The protein is Large ribosomal subunit protein bL27 of Chlorobium phaeobacteroides (strain BS1).